Consider the following 1455-residue polypeptide: MSKSLKKKSHWTSKVHESVIGRNPEGQLGFELKGGAENGQFPYLGEVKPGKVAYESGSKLVSEELLLEVNETPVAGLTIRDVLAVIKHCKDPLRLKCVKQGGIVDKDLRHYLNLRFQKGSVDHELQQIIRDNLYLRTVPCTTRPHKEGEVPGVDYIFITVEDFMELEKSGALLESGTYEDNYYGTPKPPAEPAPLLLNVTDQILPGATPSAEGKRKRNKSVSNMEKASIEPPEEEEEERPVVNGNGVVVTPESSEHEDKSAGASGEMPSQPYPAPVYSQPEELKEQMDDTKPTKPEDNEEPDPLPDNWEMAYTEKGEVYFIDHNTKTTSWLDPRLAKKAKPPEECKENELPYGWEKIDDPIYGTYYVDHINRRTQFENPVLEAKRKLQQHNMPHTELGTKPLQAPGFREKPLFTRDASQLKGTFLSTTLKKSNMGFGFTIIGGDEPDEFLQVKSVIPDGPAAQDGKMETGDVIVYINEVCVLGHTHADVVKLFQSVPIGQSVNLVLCRGYPLPFDPEDPANSMVPPLAIMERPPPVMVNGRHNYETYLEYISRTSQSVPDITDRPPHSLHSMPTDGQLDGTYPPPVHDDNVSMASSGATQAELMTLTIVKGAQGFGFTIADSPTGQRVKQILDIQGCPGLCEGDLIVEINQQNVQNLSHTEVVDILKDCPIGSETSLIIHRGGFFSPWKTPKPIMDRWENQGSPQTSLSAPAIPQNLPFPPALHRSSFPDSTEAFDPRKPDPYELYEKSRAIYESRQQVPPRTSFRMDSSGPDYKELDVHLRRMESGFGFRILGGDEPGQPILIGAVIAMGSADRDGRLHPGDELVYVDGIPVAGKTHRYVIDLMHHAARNGQVNLTVRRKVLCGGEPCPENGRSPGSVSTHHSSPRSDYATYTNSNHAAPSSNASPPEGFASHSLQTSDVVIHRKENEGFGFVIISSLNRPESGSTITVPHKIGRIIDGSPADRCAKLKVGDRILAVNGQSIINMPHADIVKLIKDAGLSVTLRIIPQEELNSPTSAPSSEKQSPMAQQSPLAQQSPLAQPSPATPNSPIAQPAPPQPLQLQGHENSYRSEVKARQDVKPDIRQPPFTDYRQPPLDYRQPPGGDYQQPPPLDYRQPPLLDYRQHSPDTRQYPLSDYRQPQDFDYFTVDMEKGAKGFGFSIRGGREYKMDLYVLRLAEDGPAIRNGRMRVGDQIIEINGESTRDMTHARAIELIKSGGRRVRLLLKRGTGQVPEYDEPAPWSSPAAAAPGLPEVGVSLDDGLAPFSPSHPAPPSDPSHQISPGPTWDIKREHDVRKPKELSACGQKKQRLGEQRERSASPQRAARPRLEEAPGGQGRPEAGRPASEARAPGLAAADAADAARAGGKEAPRAAAGSELCRREGPGAAPAFAGPGGGGSGALEAEGRAGARAGPRPGPRPPGGAPARKAAVAPGPWKVPGSDKLPSVLKPGASAASR.

Residues 17–101 (ESVIGRNPEG…PLRLKCVKQG (85 aa)) enclose the PDZ 1 domain. One can recognise a Guanylate kinase-like domain in the interval 109–283 (RHYLNLRFQK…APVYSQPEEL (175 aa)). A disordered region spans residues 205–306 (PGATPSAEGK…DNEEPDPLPD (102 aa)). Low complexity predominate over residues 241–252 (VVNGNGVVVTPE). Over residues 281-296 (EELKEQMDDTKPTKPE) the composition is skewed to basic and acidic residues. WW domains follow at residues 302-335 (DPLP…DPRL) and 348-381 (NELP…NPVL). Residues 302-381 (DPLPDNWEMA…RRTQFENPVL (80 aa)) are interaction with DDN. A Phosphotyrosine modification is found at Tyr-362. PDZ domains are found at residues 426-510 (STTL…CRGY) and 605-683 (TLTI…HRGG). Ser-686 is subject to Phosphoserine. Residues 778-860 (DVHLRRMESG…NGQVNLTVRR (83 aa)) form the PDZ 4 domain. The residue at position 827 (Tyr-827) is a Phosphotyrosine. The disordered stretch occupies residues 869–913 (CPENGRSPGSVSTHHSSPRSDYATYTNSNHAAPSSNASPPEGFAS). Residues Ser-884 and Ser-885 each carry the phosphoserine modification. The segment covering 895–908 (NSNHAAPSSNASPP) has biased composition (low complexity). The region spanning 920 to 1010 (DVVIHRKENE…SVTLRIIPQE (91 aa)) is the PDZ 5 domain. The segment covering 1011-1040 (ELNSPTSAPSSEKQSPMAQQSPLAQQSPLA) has biased composition (polar residues). The tract at residues 1011 to 1136 (ELNSPTSAPS…PDTRQYPLSD (126 aa)) is disordered. Ser-1014 is subject to Phosphoserine. Residues 1067 to 1083 (NSYRSEVKARQDVKPDI) show a composition bias toward basic and acidic residues. Residues 1147 to 1229 (TVDMEKGAKG…RVRLLLKRGT (83 aa)) form the PDZ 6 domain. Residues 1231–1455 (QVPEYDEPAP…LKPGASAASR (225 aa)) are disordered. A compositionally biased stretch (low complexity) spans 1238–1249 (PAPWSSPAAAAP). Basic and acidic residues predominate over residues 1287-1299 (DIKREHDVRKPKE). Composition is skewed to low complexity over residues 1346-1363 (EARA…AARA), 1399-1412 (ALEA…RAGP), and 1422-1433 (APARKAAVAPGP).

The protein belongs to the MAGUK family. As to quaternary structure, interacts (via its WW domains) with DRPLA. Interacts (via its second PDZ domain) with PTEN (via unphosphorylated C-terminus); this interaction diminishes the degradation rate of PTEN. Interacts (via guanylate kinase domain) with DLGAP1. Interacts (via the PDZ domains) with GRIN2A, GRID2 and NLGN1. Interacts with CTNND2, CTNNB1, MAGUIN-1, ACVR2A, SMAD2 and SMAD3. Part of a complex consisting of MAGI2/ARIP1, ACVR2A, ACVR1B and SMAD3. May interact with HTR2A. Interacts with IGSF9, RAPGEF2 and HTR4. Identified in a complex with ACTN4, CASK, IQGAP1, NPHS1, SPTAN1 and SPTBN1. Found in a complex, at least composed of KIDINS220, MAGI2, NTRK1 and RAPGEF2; the complex is mainly formed at late endosomes in a NGF-dependent manner. Interacts with RAPGEF2; the interaction occurs before or after nerve growth factor (NGF) stimulation. Interacts (via PDZ domain) with KIDINS220 (via C-terminal domain). Interacts with DDN. Interacts with DLL1. Found in a complex with IGSF9B and NLGN2; the interaction with IGSF9B is mediated via the PDZ 5 and PDZ 6 domains, while the interaction with NLGN2 is mediated via the WW1, WW2 and PDZ2 domains. Interacts (via PDZ 6 domain) with USH1G (via SAM domain); the interaction is triggered by phosphorylation of USH1G by CK2 and negatively regulates MAGI2-mediated endocytosis. Specifically expressed in brain.

The protein localises to the cytoplasm. It is found in the late endosome. It localises to the synapse. Its subcellular location is the synaptosome. The protein resides in the cell membrane. The protein localises to the cytoskeleton. It is found in the microtubule organizing center. It localises to the centrosome. Its subcellular location is the cell projection. The protein resides in the cilium. The protein localises to the centriole. It is found in the photoreceptor inner segment. It localises to the photoreceptor outer segment. Its function is as follows. Seems to act as a scaffold molecule at synaptic junctions by assembling neurotransmitter receptors and cell adhesion proteins. Plays a role in nerve growth factor (NGF)-induced recruitment of RAPGEF2 to late endosomes and neurite outgrowth. May play a role in regulating activin-mediated signaling in neuronal cells. Enhances the ability of PTEN to suppress AKT1 activation. Plays a role in receptor-mediated clathrin-dependent endocytosis which is required for ciliogenesis. The sequence is that of Membrane-associated guanylate kinase, WW and PDZ domain-containing protein 2 (MAGI2) from Homo sapiens (Human).